A 62-amino-acid polypeptide reads, in one-letter code: Large ribosomal subunit protein bL28 (62 aa).

Residues 1 to 27 (MARKCVVTGRQTRSGNQRSHAMNSNKR) form a disordered region. Polar residues predominate over residues 9 to 26 (GRQTRSGNQRSHAMNSNK).

This sequence belongs to the bacterial ribosomal protein bL28 family.

This chain is Large ribosomal subunit protein bL28, found in Oceanobacillus iheyensis (strain DSM 14371 / CIP 107618 / JCM 11309 / KCTC 3954 / HTE831).